A 333-amino-acid chain; its full sequence is MATLKEKLITHIASESTIPNNKVTVVGVGQVGMACAVSILGKSLCDELALVDVLEDKLKGEMMDLQHGSLFLQTHKIVADKDYAVTANSKIVVVTAGVRQQEGESRLNLVQRNVNVFKFIIPQIIKYSPDCIILVVSNPVDILTYVTWKLSGLPKHRVIGSGCNLDSARFRYLMSEKLGIHPSSCHGWILGEHGDSSVAVWSGVNVAGVSLQELNPAMGTDRDSEKWKEVHKQVVESAYEVIKLKGYTNWAIGFSVADLLETMMKNLNRVQPVSTMVKGMYGIENEVFLSLPCVLSASGLTSVINQKLKDDEVAQLRSSADTLWSIQKDLKDL.

Residues 29–57 and R99 each bind NAD(+); that span reads GQVGMACAVSILGKSLCDELALVDVLEDK. 3 residues coordinate substrate: R106, N138, and R169. Residue N138 coordinates NAD(+). Catalysis depends on H193, which acts as the Proton acceptor. Residue T248 coordinates substrate.

The protein belongs to the LDH/MDH superfamily. LDH family. As to quaternary structure, homotetramer.

Its subcellular location is the cytoplasm. The catalysed reaction is (S)-lactate + NAD(+) = pyruvate + NADH + H(+). It participates in fermentation; pyruvate fermentation to lactate; (S)-lactate from pyruvate: step 1/1. Functionally, interconverts simultaneously and stereospecifically pyruvate and lactate with concomitant interconversion of NADH and NAD(+). This chain is L-lactate dehydrogenase B chain (LDHB), found in Caiman crocodilus apaporiensis (Rio Apaporis caiman).